A 326-amino-acid polypeptide reads, in one-letter code: GDP-mannose transporter (326 aa).

Residues 1 to 4 lie on the Cytoplasmic side of the membrane; sequence MEKS. Residues 5-25 form a helical membrane-spanning segment; sequence ITNSPVLSILSYCAASILMTV. Residues 26–35 are Lumenal-facing; that stretch reads TNKYVLSGTS. A helical transmembrane segment spans residues 36–56; it reads FNLNLALLAVQSIVCLTAISI. At 57–74 the chain is on the cytoplasmic side; that stretch reads GKSFGLCKFRSFNADEAK. The helical transmembrane segment at 75 to 97 threads the bilayer; the sequence is KWFPIALLLVVMIYTSSKALQFL. Residues 98–100 lie on the Lumenal side of the membrane; that stretch reads SIP. The chain crosses the membrane as a helical span at residues 101–123; it reads VYTIFKNLTIILIAYGEVLWFGG. At 124 to 129 the chain is on the cytoplasmic side; the sequence is SVTSMA. Residues 130–152 traverse the membrane as a helical segment; sequence LASFVLMVLSSVIAAWSDISGAI. At 153–163 the chain is on the lumenal side; it reads AVSGSATTTVT. Residues 164-184 form a helical membrane-spanning segment; the sequence is ALNIGYFWMMSNCFASAAFVL. Residues 185–208 lie on the Cytoplasmic side of the membrane; the sequence is YMRKRIKLTNFGDFDTTFYNNLLS. A helical transmembrane segment spans residues 209–229; it reads IPVLLIASLLFEDWSPANLAV. Residues 230 to 237 lie on the Lumenal side of the membrane; it reads NFPPESRN. The helical transmembrane segment at 238 to 258 threads the bilayer; that stretch reads LIFFSMVVSGLMSIGISYCSA. Residues 259–268 are Cytoplasmic-facing; sequence WCVRVTSSTT. A helical transmembrane segment spans residues 269 to 289; that stretch reads YSMVGALNKLPLALSGIVFFG. Residues 290–291 are Lumenal-facing; sequence TP. The helical transmembrane segment at 292-312 threads the bilayer; it reads ATFSSVSAIFVGFVAGIVYAV. The Cytoplasmic segment spans residues 313–326; the sequence is AQIQKKKAEAALPK.

It belongs to the TPT transporter family. SLC35D subfamily. As to quaternary structure, homooligomer.

It is found in the golgi apparatus membrane. The protein localises to the cytoplasmic vesicle membrane. The protein resides in the endoplasmic reticulum membrane. Its function is as follows. Involved in the import of GDP-mannose from the cytoplasm into the Golgi lumen. The polypeptide is GDP-mannose transporter (VRG4) (Yarrowia lipolytica (strain CLIB 122 / E 150) (Yeast)).